Consider the following 1172-residue polypeptide: NACHT, LRR and PYD domains-containing protein 1b allele 3 (1172 aa).

The tract at residues 1–22 (MEESPPKQKSNTKVAQHEGQQD) is disordered. Residues 126 to 435 (QLVIIEGAAG…EFFAAISCIL (310 aa)) form the NACHT domain. 132–139 (GAAGIGKS) is an ATP binding site. LRR repeat units follow at residues 627-647 (NLEG…QSLC) and 684-704 (SLTE…RMLC). The ZU5 stretch occupies residues 789 to 922 (FWGPTGPVAT…GYTVLKNPSF (134 aa)). In terms of domain architecture, FIIND spans 789–1072 (FWGPTGPVAT…LRPALPRIAQ (284 aa)). The UPA stretch occupies residues 923-1072 (SPMGDVLRII…LRPALPRIAQ (150 aa)). Residues 1082 to 1165 (HFMDQHREQL…HLVMDLLEKS (84 aa)) form the CARD domain.

It belongs to the NLRP family. In terms of processing, in contrast to allele 1 and 2, not able to mediate autocatalytic cleavage. Expressed in macrophages.

The protein localises to the cytoplasm. It localises to the cytosol. Its activity is regulated as follows. In contrast to allele 1, does not undergo autocatalytic cleavage within the FIIND domain and its mode of activation remains unclear. In contrast to alleles 1 and 2, allele 3 is not activated by Val-boroPro (Talabostat, PT-100). Not activated by cleavage by B.anthracis lethal toxin (LT) endopeptidase. Not activated by metabolic inhibitors, such as 2-deoxy-D-glucose and sodium azide. Its function is as follows. May act as the sensor component of the Nlrp1b inflammasome, which mediates inflammasome activation in response to various pathogen-associated signals, leading to subsequent pyroptosis. Inflammasomes are supramolecular complexes that assemble in the cytosol in response to pathogens and other damage-associated signals and play critical roles in innate immunity and inflammation. May act as a recognition receptor (PRR), which recognizes specific pathogens and other damage-associated signals and forms an inflammasome complex: the inflammasome directly recruits pro-caspase-1 (proCASP1) independently of PYCARD/ASC and promotes caspase-1 (CASP1) activation, which subsequently cleaves and activates inflammatory cytokines IL1B and IL18 and gasdermin-D (GSDMD), leading to pyroptosis. In the absence of GSDMD expression, the Nlrp1b inflammasome is able to recruit and activate CASP8, leading to activation of gasdermin-E (GSDME). Contrary to Nlrp1b allele 1, allele 3 is not activated by Bacillus anthracis lethal toxin. The absence of autocatalytic cleavage within the FIIND domain, which regulates activation in other alleles, suggests that allele 3 may be non-functional. The sequence is that of NACHT, LRR and PYD domains-containing protein 1b allele 3 from Mus musculus (Mouse).